A 146-amino-acid polypeptide reads, in one-letter code: Small ribosomal subunit protein eS17 (146 aa).

It belongs to the eukaryotic ribosomal protein eS17 family. As to quaternary structure, component of the small ribosomal subunit (SSU). Mature N.crassa ribosomes consist of a small (40S) and a large (60S) subunit. The 40S small subunit contains 1 molecule of ribosomal RNA (18S rRNA) and at least 32 different proteins. The large 60S subunit contains 3 rRNA molecules (26S, 5.8S and 5S rRNA) and at least 42 different proteins.

It is found in the cytoplasm. In terms of biological role, component of the ribosome, a large ribonucleoprotein complex responsible for the synthesis of proteins in the cell. The small ribosomal subunit (SSU) binds messenger RNAs (mRNAs) and translates the encoded message by selecting cognate aminoacyl-transfer RNA (tRNA) molecules. The large subunit (LSU) contains the ribosomal catalytic site termed the peptidyl transferase center (PTC), which catalyzes the formation of peptide bonds, thereby polymerizing the amino acids delivered by tRNAs into a polypeptide chain. The nascent polypeptides leave the ribosome through a tunnel in the LSU and interact with protein factors that function in enzymatic processing, targeting, and the membrane insertion of nascent chains at the exit of the ribosomal tunnel. The sequence is that of Small ribosomal subunit protein eS17 (rps-17) from Neurospora crassa (strain ATCC 24698 / 74-OR23-1A / CBS 708.71 / DSM 1257 / FGSC 987).